Reading from the N-terminus, the 349-residue chain is Ornithine carbamoyltransferase, mitochondrial (349 aa).

Residues 73–76, R124, H151, and Q154 contribute to the carbamoyl phosphate site; that span reads STRT. L-ornithine contacts are provided by N195, D261, S265, and M266. The active-site Proton acceptor is C303. Carbamoyl phosphate-binding positions include 303-304 and R330; that span reads CL.

This sequence belongs to the aspartate/ornithine carbamoyltransferase superfamily. OTCase family. Homotrimer.

The protein localises to the mitochondrion matrix. The enzyme catalyses carbamoyl phosphate + L-ornithine = L-citrulline + phosphate + H(+). Its pathway is amino-acid biosynthesis; L-arginine biosynthesis; L-arginine from L-ornithine and carbamoyl phosphate: step 1/3. The polypeptide is Ornithine carbamoyltransferase, mitochondrial (Coccidioides immitis (strain RS) (Valley fever fungus)).